Here is a 272-residue protein sequence, read N- to C-terminus: 1,4-dihydroxy-2-naphthoyl-CoA synthase (272 aa).

Residues R33, 72–76, Y84, 116–120, T142, S148, Y245, and K260 each bind substrate; these read SGGDQ and YAIGG. A hydrogencarbonate-binding site is contributed by 141-143; that stretch reads QTG. Positions 253–264 are enriched in basic and acidic residues; it reads GRDAFKEKRDPD. The segment at 253–272 is disordered; sequence GRDAFKEKRDPDFDQFPKFP.

This sequence belongs to the enoyl-CoA hydratase/isomerase family. MenB subfamily. It depends on hydrogencarbonate as a cofactor.

The catalysed reaction is 2-succinylbenzoyl-CoA + H(+) = 1,4-dihydroxy-2-naphthoyl-CoA + H2O. The protein operates within quinol/quinone metabolism; 1,4-dihydroxy-2-naphthoate biosynthesis; 1,4-dihydroxy-2-naphthoate from chorismate: step 6/7. Its pathway is quinol/quinone metabolism; menaquinone biosynthesis. In terms of biological role, converts o-succinylbenzoyl-CoA (OSB-CoA) to 1,4-dihydroxy-2-naphthoyl-CoA (DHNA-CoA). This chain is 1,4-dihydroxy-2-naphthoyl-CoA synthase, found in Staphylococcus saprophyticus subsp. saprophyticus (strain ATCC 15305 / DSM 20229 / NCIMB 8711 / NCTC 7292 / S-41).